We begin with the raw amino-acid sequence, 161 residues long: Phosphopantetheine adenylyltransferase (161 aa).

Thr-11 provides a ligand contact to substrate. ATP-binding positions include 11 to 12 (TF) and His-19. 3 residues coordinate substrate: Lys-43, Thr-75, and Arg-89. ATP-binding positions include 90–92 (GLR), Glu-100, and 125–131 (YSFLSSS).

Belongs to the bacterial CoaD family. As to quaternary structure, homohexamer. It depends on Mg(2+) as a cofactor.

The protein localises to the cytoplasm. It carries out the reaction (R)-4'-phosphopantetheine + ATP + H(+) = 3'-dephospho-CoA + diphosphate. The protein operates within cofactor biosynthesis; coenzyme A biosynthesis; CoA from (R)-pantothenate: step 4/5. In terms of biological role, reversibly transfers an adenylyl group from ATP to 4'-phosphopantetheine, yielding dephospho-CoA (dPCoA) and pyrophosphate. This is Phosphopantetheine adenylyltransferase from Listeria innocua serovar 6a (strain ATCC BAA-680 / CLIP 11262).